The chain runs to 127 residues: Oleate-induced peroxisomal protein POX18 (127 aa).

The region spanning 14–119 (FKELHEGLAD…KATAIESVFK (106 aa)) is the SCP2 domain. The tract at residues 33–41 (AVNAVIVIT) is hydrophobic. Residues 43–52 (KNKEGKEQSW) form a hydrophilic region.

Monomer.

It is found in the peroxisome. The protein operates within lipid metabolism; fatty acid metabolism. Is involved in beta-oxidation of long-chain fatty acids. Its exact function is unknown, but possesses a nonspecific lipid-transfer activity, despite the absence of a cysteine residue thought to be essential for the activity of its mammalian counterparts. The protein is Oleate-induced peroxisomal protein POX18 (POX18) of Candida maltosa (Yeast).